The following is a 97-amino-acid chain: Small ribosomal subunit protein bS20 (97 aa).

The protein belongs to the bacterial ribosomal protein bS20 family.

Binds directly to 16S ribosomal RNA. The chain is Small ribosomal subunit protein bS20 from Prochlorococcus marinus (strain MIT 9301).